Reading from the N-terminus, the 390-residue chain is MKLLGHKIELWAGLLLPDVSISGMSELRFPEEKPLLRGQDTEMESADTFLSAADTDWKEHDIETPYGMLHVVIRGTPKGNRPAILTYHDVGLNHKLCFNTFFNYEDMQEITKHFVVCHVDAPGQQVGASQFPQGYQYPTMDQLAAMLPSVMQHFGFQSIIAIGVGAGAYVLAKFALIFPELVEGMVLINIDPNGKGWIDWAASKISGLASSLPETVLSHLFSQEELMNNTELVQNYRQQISNCVNQSNLQLFWNMYNSRRDLEMSRPGTAPNAKTLRAPVMLVVGDNAPAEECVVECNSKLDPTNTTFLKMADSGGLPQVTQPGKLTEAFKYFLQGMGYMPSASMTRLARSRTASLTSASSVDGSRPRPCTQSESSDGIGQINHTMEVSC.

The interval 356 to 390 is disordered; it reads LTSASSVDGSRPRPCTQSESSDGIGQINHTMEVSC. The span at 370–390 shows a compositional bias: polar residues; the sequence is CTQSESSDGIGQINHTMEVSC.

It belongs to the NDRG family.

Its subcellular location is the cytoplasm. The protein localises to the cytosol. Its function is as follows. Contributes to the maintenance of intracerebral BDNF levels within the normal range. May enhance growth factor-induced ERK1 and ERK2 phosphorylation. May attenuate growth factor-promoted ELK1 phosphorylation in a microtubule-dependent manner. This is Protein NDRG4-A (ndrg4-a) from Xenopus laevis (African clawed frog).